The following is a 229-amino-acid chain: MCDKSKENLRQIKSYVQRAGRVTKKQQQALDNYAAKYLIEYAKDRKLDFTEIFANTNDVVLEIGFGMGGSLVEMALANPAKNYLGIEVHKAGVGNILYEIEHQNIANLLVMSHDAVEILENMIADQSLASIQVYFPDPWHKKKHNKRRLVNQTNIDLFAKKLKVGGVFHYASDWLPYAEEVLELLENDSKYRNLYSGFAPRPEWRPLTKFEKRGQNLDHPISDILFEKI.

S-adenosyl-L-methionine-binding residues include Glu-62, Glu-87, Asp-114, and Asp-137. Asp-137 is a catalytic residue. Lys-141 provides a ligand contact to substrate. An interaction with RNA region spans residues 143–148 (KHNKRR). Substrate contacts are provided by residues Asp-173 and 208–211 (TKFE).

The protein belongs to the class I-like SAM-binding methyltransferase superfamily. TrmB family.

The enzyme catalyses guanosine(46) in tRNA + S-adenosyl-L-methionine = N(7)-methylguanosine(46) in tRNA + S-adenosyl-L-homocysteine. It functions in the pathway tRNA modification; N(7)-methylguanine-tRNA biosynthesis. Catalyzes the formation of N(7)-methylguanine at position 46 (m7G46) in tRNA. The polypeptide is tRNA (guanine-N(7)-)-methyltransferase (Francisella tularensis subsp. novicida (strain U112)).